Reading from the N-terminus, the 1077-residue chain is Carbamoyl phosphate synthase large chain (1077 aa).

The carboxyphosphate synthetic domain stretch occupies residues 2–403 (PKRTDIKSIL…SLQKALRGLE (402 aa)). ATP contacts are provided by Arg129, Arg169, Gly175, Gly176, Glu208, Leu210, Glu215, Gly241, Ile242, His243, Gln285, and Glu299. Residues 133-328 (DIAMKKIGLD…IAKIAAKLAV (196 aa)) enclose the ATP-grasp 1 domain. The Mg(2+) site is built by Gln285, Glu299, and Asn301. Positions 285, 299, and 301 each coordinate Mn(2+). The tract at residues 404–553 (VGATGFDPKV…YSTYEEECES (150 aa)) is oligomerization domain. The segment at 554 to 936 (NPTSDRPKVM…AFSKAMLGSQ (383 aa)) is carbamoyl phosphate synthetic domain. The ATP-grasp 2 domain occupies 679 to 870 (QQAVNRLGLK…LAKIAARVMV (192 aa)). ATP-binding residues include Arg715, Arg754, Leu756, Glu761, Gly786, Val787, His788, Ser789, Gln829, and Glu841. Gln829, Glu841, and Asn843 together coordinate Mg(2+). Mn(2+)-binding residues include Gln829, Glu841, and Asn843. The region spanning 937 to 1077 (SGMKKSGRAL…MHAKIKNMKA (141 aa)) is the MGS-like domain. The segment at 937–1077 (SGMKKSGRAL…MHAKIKNMKA (141 aa)) is allosteric domain.

It belongs to the CarB family. Composed of two chains; the small (or glutamine) chain promotes the hydrolysis of glutamine to ammonia, which is used by the large (or ammonia) chain to synthesize carbamoyl phosphate. Tetramer of heterodimers (alpha,beta)4. Mg(2+) serves as cofactor. Mn(2+) is required as a cofactor.

It carries out the reaction hydrogencarbonate + L-glutamine + 2 ATP + H2O = carbamoyl phosphate + L-glutamate + 2 ADP + phosphate + 2 H(+). The enzyme catalyses hydrogencarbonate + NH4(+) + 2 ATP = carbamoyl phosphate + 2 ADP + phosphate + 2 H(+). The protein operates within amino-acid biosynthesis; L-arginine biosynthesis; carbamoyl phosphate from bicarbonate: step 1/1. Its pathway is pyrimidine metabolism; UMP biosynthesis via de novo pathway; (S)-dihydroorotate from bicarbonate: step 1/3. Functionally, large subunit of the glutamine-dependent carbamoyl phosphate synthetase (CPSase). CPSase catalyzes the formation of carbamoyl phosphate from the ammonia moiety of glutamine, carbonate, and phosphate donated by ATP, constituting the first step of 2 biosynthetic pathways, one leading to arginine and/or urea and the other to pyrimidine nucleotides. The large subunit (synthetase) binds the substrates ammonia (free or transferred from glutamine from the small subunit), hydrogencarbonate and ATP and carries out an ATP-coupled ligase reaction, activating hydrogencarbonate by forming carboxy phosphate which reacts with ammonia to form carbamoyl phosphate. In Yersinia pestis, this protein is Carbamoyl phosphate synthase large chain.